Reading from the N-terminus, the 405-residue chain is Envelope glycoprotein M (405 aa).

Residues 1 to 17 (MKSSKNDTFVYRTWFKT) are Intravirion-facing. Residues 18–38 (LVVYFVMFVMSAVVPITAMFP) form a helical membrane-spanning segment. The Virion surface segment spans residues 39 to 76 (NLGYPCYFNALVDYGALNLTNYNLAHHLTPTLYLEPPE). The helical transmembrane segment at 77–97 (MFVYITLVFIADCVAFIYYAC) threads the bilayer. The Intravirion segment spans residues 98-121 (GEVALIKARKKVSGLTDLSAWVSA). A helical membrane pass occupies residues 122–142 (VGSPTVLFLAILKLWSIQVFI). Over 143-149 (QVLSYKH) the chain is Virion surface. The helical transmembrane segment at 150–170 (VFLSAFVYFLHFLASVLHACA) threads the bilayer. The Intravirion portion of the chain corresponds to 171 to 192 (CVTRFSPVWVVKAQDNSIPQDT). A helical membrane pass occupies residues 193-215 (FLWWVVFYLKPIVTNLYLGCLAL). The Virion surface portion of the chain corresponds to 216–245 (ETLVFSLSVFLALGNSFYFMVGDMVLGAVN). Residues 246–266 (LFLVLPIFWYILTEVWLASFL) form a helical membrane-spanning segment. Arginine 267 is a topological domain (intravirion). Residues 268-288 (HNFGFYCGMFIASIILILPLV) traverse the membrane as a helical segment. Residues 289–299 (RYEAVFVSAKL) lie on the Virion surface side of the membrane. A helical membrane pass occupies residues 300–320 (HTTVAINVAIIPILCSVAMLI). Residues 321–405 (RICRIFKSMR…TTDSEEEIFP (85 aa)) are Intravirion-facing. The tract at residues 346 to 405 (LESEPRPRPSRTPSPGRNRRRSSTSSSSSRSTRRQRPVSTQALISSVLPMTTDSEEEIFP) is disordered. Over residues 386-397 (QALISSVLPMTT) the composition is skewed to polar residues.

This sequence belongs to the herpesviridae glycoprotein M family. As to quaternary structure, interacts (via N-terminus) with gN (via N-terminus). The gM-gN heterodimer forms the gCII complex.

It is found in the virion membrane. The protein localises to the host Golgi apparatus. Its subcellular location is the host trans-Golgi network. It localises to the host endosome membrane. The protein resides in the host nucleus inner membrane. Envelope glycoprotein important for virion assembly and egress. Plays a role in the correct incorporation of gH-gL into virion membrane. Directs the glycoprotein N (gN) to the host trans-Golgi network. In Homo sapiens (Human), this protein is Envelope glycoprotein M.